Reading from the N-terminus, the 120-residue chain is MRHYEIVLLIHPDQSEQVPAMLERYKGMITAGGGKVHREEDWGRRQLAYMINKLAKAHYLCLNIEADQAVMAELEHAFKFNDAVLRHLTVQKKKADTAPSSMMKTVEREEARKASQTEQA.

A disordered region spans residues 93-120 (KKADTAPSSMMKTVEREEARKASQTEQA). The segment covering 105–120 (TVEREEARKASQTEQA) has biased composition (basic and acidic residues).

The protein belongs to the bacterial ribosomal protein bS6 family.

Binds together with bS18 to 16S ribosomal RNA. The chain is Small ribosomal subunit protein bS6 from Delftia acidovorans (strain DSM 14801 / SPH-1).